The following is a 132-amino-acid chain: Small ribosomal subunit protein uS8 (132 aa).

Belongs to the universal ribosomal protein uS8 family. In terms of assembly, part of the 30S ribosomal subunit. Contacts proteins S5 and S12.

One of the primary rRNA binding proteins, it binds directly to 16S rRNA central domain where it helps coordinate assembly of the platform of the 30S subunit. This is Small ribosomal subunit protein uS8 from Streptomyces avermitilis (strain ATCC 31267 / DSM 46492 / JCM 5070 / NBRC 14893 / NCIMB 12804 / NRRL 8165 / MA-4680).